Reading from the N-terminus, the 233-residue chain is Octanoyltransferase (233 aa).

In terms of domain architecture, BPL/LPL catalytic spans 36–211 (DTTPDEIWLV…EFTRQLGYPT (176 aa)). Substrate is bound by residues 75 to 82 (RGGQITYH), 142 to 144 (SLG), and 155 to 157 (GLA). The active-site Acyl-thioester intermediate is the C173.

Belongs to the LipB family.

It localises to the cytoplasm. It carries out the reaction octanoyl-[ACP] + L-lysyl-[protein] = N(6)-octanoyl-L-lysyl-[protein] + holo-[ACP] + H(+). It functions in the pathway protein modification; protein lipoylation via endogenous pathway; protein N(6)-(lipoyl)lysine from octanoyl-[acyl-carrier-protein]: step 1/2. Catalyzes the transfer of endogenously produced octanoic acid from octanoyl-acyl-carrier-protein onto the lipoyl domains of lipoate-dependent enzymes. Lipoyl-ACP can also act as a substrate although octanoyl-ACP is likely to be the physiological substrate. This Yersinia pseudotuberculosis serotype O:1b (strain IP 31758) protein is Octanoyltransferase.